A 305-amino-acid chain; its full sequence is VNDPFITTDYMTYMFKYDTVHGQWKHHEVKVKDSKTLLFGEKEVAVFGCRNPEEIPWAAAGAEYVVESTGVFTDKDKAAAHIKGGAKKVIISAPSKDAPMFVCGVNEKEYKSDIDIVSNASCTTNCPAPLAKVINDRFGIVEGLMTTVHAMTATQKTVDGPSSKDWRGGRAASFNIIPSSTGAAKAVGKVLPELNGKLTGMAFRVPTVDVSVVDLTVRLAKPATYEQIKAAIKEESEGNLKGILGYVDEDLVSTDFQGDSRSSIFDAKAGIALNDNFVKLVSWYDNEWGYSTRVVDLIRHMHSTK.

Residues D3 and R50 each contribute to the NAD(+) site. D-glyceraldehyde 3-phosphate contacts are provided by residues 121–123 (SCT), T152, 181–182 (TG), and R204. The active-site Nucleophile is C122. Residue N286 coordinates NAD(+).

The protein belongs to the glyceraldehyde-3-phosphate dehydrogenase family. As to quaternary structure, homotetramer.

The protein localises to the cytoplasm. The enzyme catalyses D-glyceraldehyde 3-phosphate + phosphate + NAD(+) = (2R)-3-phospho-glyceroyl phosphate + NADH + H(+). It functions in the pathway carbohydrate degradation; glycolysis; pyruvate from D-glyceraldehyde 3-phosphate: step 1/5. Its function is as follows. Key enzyme in glycolysis that catalyzes the first step of the pathway by converting D-glyceraldehyde 3-phosphate (G3P) into 3-phospho-D-glyceroyl phosphate. Essential for the maintenance of cellular ATP levels and carbohydrate metabolism. This is Glyceraldehyde-3-phosphate dehydrogenase 2, cytosolic (GAPC) from Hordeum vulgare (Barley).